A 146-amino-acid chain; its full sequence is 3-dehydroquinate dehydratase (146 aa).

Tyr24 acts as the Proton acceptor in catalysis. Positions 75, 81, and 88 each coordinate substrate. The active-site Proton donor is His101. Residues 102–103 (LS) and Arg112 each bind substrate.

The protein belongs to the type-II 3-dehydroquinase family. In terms of assembly, homododecamer.

It carries out the reaction 3-dehydroquinate = 3-dehydroshikimate + H2O. Its pathway is metabolic intermediate biosynthesis; chorismate biosynthesis; chorismate from D-erythrose 4-phosphate and phosphoenolpyruvate: step 3/7. In terms of biological role, catalyzes a trans-dehydration via an enolate intermediate. The polypeptide is 3-dehydroquinate dehydratase (Maricaulis maris (strain MCS10) (Caulobacter maris)).